A 79-amino-acid chain; its full sequence is MORN repeat-containing protein 2 (79 aa).

MORN repeat units follow at residues Tyr15–Ala36 and Tyr38–Asp55.

It localises to the cytoplasmic vesicle. It is found in the secretory vesicle. Its subcellular location is the acrosome. The protein localises to the nucleus. Its function is as follows. Might have a role in spermatogenesis. The sequence is that of MORN repeat-containing protein 2 from Homo sapiens (Human).